Consider the following 353-residue polypeptide: Phosphate acyltransferase (353 aa).

Belongs to the PlsX family. In terms of assembly, homodimer. Probably interacts with PlsY.

The protein resides in the cytoplasm. It catalyses the reaction a fatty acyl-[ACP] + phosphate = an acyl phosphate + holo-[ACP]. Its pathway is lipid metabolism; phospholipid metabolism. Its function is as follows. Catalyzes the reversible formation of acyl-phosphate (acyl-PO(4)) from acyl-[acyl-carrier-protein] (acyl-ACP). This enzyme utilizes acyl-ACP as fatty acyl donor, but not acyl-CoA. The polypeptide is Phosphate acyltransferase (Rhodopseudomonas palustris (strain ATCC BAA-98 / CGA009)).